The primary structure comprises 247 residues: Chromosome partition protein MukE (247 aa).

A disordered region spans residues 213 to 247; the sequence is AQSLQEEKNGLKDNMDQSAVENEQYFENEENEGIA. Over residues 217–227 the composition is skewed to basic and acidic residues; sequence QEEKNGLKDNM. The span at 236 to 247 shows a compositional bias: acidic residues; that stretch reads QYFENEENEGIA.

It belongs to the MukE family. Interacts, and probably forms a ternary complex, with MukF and MukB. The complex formation is stimulated by calcium or magnesium.

The protein localises to the cytoplasm. It is found in the nucleoid. Its function is as follows. Involved in chromosome condensation, segregation and cell cycle progression. May participate in facilitating chromosome segregation by condensation DNA from both sides of a centrally located replisome during cell division. Probably acts via its interaction with MukB and MukF. The sequence is that of Chromosome partition protein MukE from Histophilus somni (strain 2336) (Haemophilus somnus).